A 704-amino-acid polypeptide reads, in one-letter code: Elongation factor G (704 aa).

Residues 10–290 form the tr-type G domain; that stretch reads NKVRNIGIMA…AVIDYLPSPL (281 aa). GTP contacts are provided by residues 19–26, 83–87, and 137–140; these read AHIDAGKT, DTPGH, and NKMD.

It belongs to the TRAFAC class translation factor GTPase superfamily. Classic translation factor GTPase family. EF-G/EF-2 subfamily.

Its subcellular location is the cytoplasm. In terms of biological role, catalyzes the GTP-dependent ribosomal translocation step during translation elongation. During this step, the ribosome changes from the pre-translocational (PRE) to the post-translocational (POST) state as the newly formed A-site-bound peptidyl-tRNA and P-site-bound deacylated tRNA move to the P and E sites, respectively. Catalyzes the coordinated movement of the two tRNA molecules, the mRNA and conformational changes in the ribosome. The polypeptide is Elongation factor G (Clavibacter michiganensis subsp. michiganensis (strain NCPPB 382)).